A 557-amino-acid polypeptide reads, in one-letter code: Arginine--tRNA ligase (557 aa).

A 'HIGH' region motif is present at residues 128–138; sequence ANPTGPLHVGH.

The protein belongs to the class-I aminoacyl-tRNA synthetase family. As to quaternary structure, monomer.

Its subcellular location is the cytoplasm. The catalysed reaction is tRNA(Arg) + L-arginine + ATP = L-arginyl-tRNA(Arg) + AMP + diphosphate. The chain is Arginine--tRNA ligase from Thiobacillus denitrificans (strain ATCC 25259 / T1).